Consider the following 330-residue polypeptide: G-protein coupled bile acid receptor 1 (330 aa).

The Extracellular portion of the chain corresponds to 1–19 (MTPNSTGEVPSPIPKGALG). Residue asparagine 4 is glycosylated (N-linked (GlcNAc...) asparagine). The helical transmembrane segment at 20 to 40 (LSLALASLIITANLLLALGIA) threads the bilayer. Residues 41 to 50 (WDRRLRSPPA) lie on the Cytoplasmic side of the membrane. Residues 51-71 (GCFFLSLLLAGLLTGLALPTL) form a helical membrane-spanning segment. Residues 72–85 (PGLWNQSRRGYWSC) are Extracellular-facing. Residue asparagine 76 is glycosylated (N-linked (GlcNAc...) asparagine). A disulfide bridge links cysteine 85 with cysteine 155. The chain crosses the membrane as a helical span at residues 86-106 (LLVYLAPNFSFLSLLANLLLV). Over 107–125 (HGERYMAVLRPLQPPGSIR) the chain is Cytoplasmic. The chain crosses the membrane as a helical span at residues 126 to 146 (LALLLTWAGPLLFASLPALGW). Topologically, residues 147–165 (NHWTPGANCSSQAIFPAPY) are extracellular. The helical transmembrane segment at 166–186 (LYLEVYGLLLPAVGAAAFLSV) threads the bilayer. The Cytoplasmic portion of the chain corresponds to 187–228 (RVLATAHRQLQDICRLERAVCRDEPSALARALTWRQARAQAG). The chain crosses the membrane as a helical span at residues 229 to 249 (AMLLFGLCWGPYVATLLLSVL). Topologically, residues 250–261 (AYEQRPPLGPGT) are extracellular. A helical membrane pass occupies residues 262–282 (LLSLLSLGSASAAAVPVAMGL). Residues 283-330 (GDQRYTAPWRAAAQRCLQGLWGRASRDSPGPSIAYHPSSQSSVDLDLN) lie on the Cytoplasmic side of the membrane. A disordered region spans residues 309–330 (DSPGPSIAYHPSSQSSVDLDLN). The span at 319–330 (PSSQSSVDLDLN) shows a compositional bias: polar residues.

The protein belongs to the G-protein coupled receptor 1 family. In terms of tissue distribution, ubiquitously expressed. Expressed at higher level in spleen and placenta. Expressed at lower level in other tissues. In digestive tissues, it is expressed in stomach, duodenum, ileocecum, ileum, jejunum, ascending colon, transverse colon, descending colon, cecum and liver, but not in esophagus and rectum.

It is found in the cell membrane. In terms of biological role, receptor for bile acid. Bile acid-binding induces its internalization, activation of extracellular signal-regulated kinase and intracellular cAMP production. May be involved in the suppression of macrophage functions by bile acids. The polypeptide is G-protein coupled bile acid receptor 1 (GPBAR1) (Homo sapiens (Human)).